The chain runs to 178 residues: Inorganic pyrophosphatase (178 aa).

Residues Lys30, Arg44, and Tyr56 each coordinate substrate. 3 residues coordinate Mg(2+): Asp66, Asp71, and Asp103. Tyr140 serves as a coordination point for substrate.

Belongs to the PPase family. As to quaternary structure, homohexamer. Mg(2+) serves as cofactor.

Its subcellular location is the cytoplasm. The enzyme catalyses diphosphate + H2O = 2 phosphate + H(+). Its function is as follows. Catalyzes the hydrolysis of inorganic pyrophosphate (PPi) forming two phosphate ions. In Pyrococcus furiosus (strain ATCC 43587 / DSM 3638 / JCM 8422 / Vc1), this protein is Inorganic pyrophosphatase.